A 422-amino-acid chain; its full sequence is Solute carrier family 35 member D3 (422 aa).

10 consecutive transmembrane segments (helical) span residues 9–29 (VLGI…NILL), 38–58 (FSFL…SLEL), 64–84 (LIAV…VAVL), 103–123 (MYVV…VLVL), 131–151 (GVLA…AGDL), 155–175 (PIGY…LVLI), 187–207 (LTAQ…CSFA), 224–244 (AMVS…FTTL), 257–277 (FVGV…FSDV), and 280–300 (TSLF…YCVA). The segment at 339–365 (AKSGNSEPESAEGAGDSVQQGGQESRG) is disordered. Residues 355–364 (SVQQGGQESR) show a composition bias toward polar residues.

It belongs to the TPT transporter family. SLC35D subfamily. Could interact with ATG14, BECN1 and PIK3C3 that form the PI3KC3-C1/AIC/autophagy initiation complex; enhancing the formation of the AIC and promoting autophagy. Expressed in brain. Expressed in subsets of dopaminergic neurons. Expressed in maturing megakaryocytes.

It is found in the cytoplasmic vesicle. Its subcellular location is the secretory vesicle. It localises to the synaptic vesicle membrane. The protein localises to the early endosome membrane. The protein resides in the endoplasmic reticulum membrane. It carries out the reaction UDP-alpha-D-glucose(in) = UDP-alpha-D-glucose(out). Its activity is regulated as follows. Inhibited by proton uncouplers that directly abolish the proton electrochemical gradient. Its function is as follows. Probable UDP-glucose transmembrane transporter involved in UDP-glucose transport from the cytosol to the lumen of synaptic vesicles. It is involved in platelet dense granules maturation. In terms of biological role, alternatively, could function as a molecular adapter enhancing the formation of the PI3KC3-C1/AIC/autophagy initiation complex to promote autophagy in dopaminergic neurons. Could also regulate the plasma membrane localization of the D(1A) dopamine receptor/DRD1 and dopamine signaling. This Mus musculus (Mouse) protein is Solute carrier family 35 member D3.